Here is a 1272-residue protein sequence, read N- to C-terminus: Fused isobutyryl-CoA mutase (1272 aa).

Residues 20–158 (RLRFVTAAAL…ARCAEGARAA (139 aa)) enclose the B12-binding domain. His33 provides a ligand contact to adenosylcob(III)alamin. Residues 163–536 (ESQVGAWAAE…YRHVAEALRK (374 aa)) are GTPase chaperone MeaI. The segment at 193–240 (GAVARNPSSEASRVAAAGRGDHLDRGVRAASTADTADTANTANTANTA) is disordered. Over residues 221-240 (AASTADTADTANTANTANTA) the composition is skewed to low complexity. Residue 334–339 (GAGKSS) participates in GTP binding. Residues Ser338, Ile363, Asp364, and Asp377 each contribute to the Mg(2+) site. Residue Arg380 coordinates GTP. Positions 429 and 430 each coordinate Mg(2+). 476 to 479 (NKFD) provides a ligand contact to GTP. Residues 537-758 (HGLRSGGGRL…MLDNLPGYFP (222 aa)) are linker. Composition is skewed to low complexity over residues 614-631 (TVAT…KANA) and 639-663 (ANAS…ATPT). Positions 614 to 667 (TVATSASPGASASSKANACTSTSSKANASPGANTTANSNASATSGTATPTDALN) are disordered. Substrate contacts are provided by Phe766, Arg801, Arg907, Tyr951, Ser1000, Arg1035, and Lys1040. GTP-binding residues include Glu1152 and Asn1271.

This sequence belongs to the IcmF family. In terms of assembly, homodimer. Adenosylcob(III)alamin is required as a cofactor. Mg(2+) serves as cofactor.

The enzyme catalyses 2-methylpropanoyl-CoA = butanoyl-CoA. It carries out the reaction GTP + H2O = GDP + phosphate + H(+). Functionally, catalyzes the reversible interconversion of isobutyryl-CoA and n-butyryl-CoA, using radical chemistry. Also exhibits GTPase activity, associated with its G-protein domain (MeaI) that functions as a chaperone that assists cofactor delivery and proper holo-enzyme assembly. Does not exhibit methylmalonyl-CoA mutase (MCM) activity. This Paraburkholderia xenovorans (strain LB400) protein is Fused isobutyryl-CoA mutase.